The sequence spans 128 residues: Ribosome-binding factor A (128 aa).

Belongs to the RbfA family. As to quaternary structure, monomer. Binds 30S ribosomal subunits, but not 50S ribosomal subunits or 70S ribosomes.

Its subcellular location is the cytoplasm. Functionally, one of several proteins that assist in the late maturation steps of the functional core of the 30S ribosomal subunit. Associates with free 30S ribosomal subunits (but not with 30S subunits that are part of 70S ribosomes or polysomes). Required for efficient processing of 16S rRNA. May interact with the 5'-terminal helix region of 16S rRNA. The chain is Ribosome-binding factor A from Rickettsia prowazekii (strain Madrid E).